The sequence spans 365 residues: Alanine racemase (365 aa).

Lys-32 (proton acceptor; specific for D-alanine) is an active-site residue. Lys-32 bears the N6-(pyridoxal phosphate)lysine mark. Arg-128 serves as a coordination point for substrate. The active-site Proton acceptor; specific for L-alanine is the Tyr-257. A substrate-binding site is contributed by Met-305.

The protein belongs to the alanine racemase family. The cofactor is pyridoxal 5'-phosphate.

It carries out the reaction L-alanine = D-alanine. Its pathway is amino-acid biosynthesis; D-alanine biosynthesis; D-alanine from L-alanine: step 1/1. In terms of biological role, catalyzes the interconversion of L-alanine and D-alanine. May also act on other amino acids. This chain is Alanine racemase (alr), found in Francisella tularensis subsp. holarctica (strain FTNF002-00 / FTA).